Consider the following 262-residue polypeptide: Ornithine carbamoyltransferase (262 aa).

Carbamoyl phosphate is bound by residues 3 to 7 (STRTR), Gln30, Arg54, and 81 to 84 (HPTQ). Residues Asn114, Asp178, and 182–183 (SM) contribute to the L-ornithine site. Carbamoyl phosphate is bound by residues 219 to 222 (HCLP) and Thr247.

The protein belongs to the aspartate/ornithine carbamoyltransferase superfamily. OTCase family.

The protein localises to the cytoplasm. It catalyses the reaction carbamoyl phosphate + L-ornithine = L-citrulline + phosphate + H(+). It participates in amino-acid biosynthesis; L-arginine biosynthesis; L-arginine from L-ornithine and carbamoyl phosphate: step 1/3. Its function is as follows. Reversibly catalyzes the transfer of the carbamoyl group from carbamoyl phosphate (CP) to the N(epsilon) atom of ornithine (ORN) to produce L-citrulline. In Neisseria mucosa, this protein is Ornithine carbamoyltransferase (argF).